We begin with the raw amino-acid sequence, 524 residues long: Zinc finger CCCH-type with G patch domain-containing protein (524 aa).

Residues 105 to 142 form a disordered region; that stretch reads SEESQPLGSNDETSTCSKGSEEEEEEEEEEEDNTSGMK. Residues 106-122 are compositionally biased toward polar residues; the sequence is EESQPLGSNDETSTCSK. The segment covering 125–137 has biased composition (acidic residues); sequence EEEEEEEEEEEDN. The C3H1-type zinc-finger motif lies at 184–210; the sequence is KAMKPCPFFLDGKCLFNDNCRFSHGQV. Residues 279-298 are disordered; that stretch reads RGSDSSSSSSSDEEEDGAAE. A G-patch domain is found at 326–372; sequence TRGIGSKLLVRMGYEFGKGLGRNAEGRVEPIQAVVLPKGKSLDQCME. Disordered regions lie at residues 375–402 and 500–524; these read QRKKAGGKHKHKTSKRRPKASGQGGGAK and GLQQEERSLQREQKKADTHKKMTEF. Residues 376-393 show a composition bias toward basic residues; sequence RKKAGGKHKHKTSKRRPK.

It localises to the nucleus. Functionally, transcription repressor that specifically binds the 5'-GGAG[GA]A[GA]A-3' consensus sequence. Represses transcription by recruiting the chromatin multiprotein complex NuRD to target promoters. Negatively regulates expression of EGFR, a gene involved in cell proliferation, survival and migration. This is Zinc finger CCCH-type with G patch domain-containing protein (zgpat) from Xenopus laevis (African clawed frog).